A 796-amino-acid chain; its full sequence is Volume-regulated anion channel subunit LRRC8E (796 aa).

The Cytoplasmic segment spans residues Met-1–Pro-22. The chain crosses the membrane as a helical span at residues Trp-23–Cys-43. The Extracellular portion of the chain corresponds to Thr-44–Lys-116. A disulfide bond links Cys-54 and Cys-301. N-linked (GlcNAc...) asparagine glycosylation occurs at Asn-63. A helical transmembrane segment spans residues Tyr-117–Phe-137. Over Lys-138–Lys-265 the chain is Cytoplasmic. A helical transmembrane segment spans residues Phe-266–Cys-286. Over Arg-287 to Ala-313 the chain is Extracellular. N-linked (GlcNAc...) asparagine glycosylation occurs at Asn-302. Residues Phe-314–Leu-334 form a helical membrane-spanning segment. The Cytoplasmic segment spans residues Phe-335–Glu-796. LRR repeat units follow at residues Gly-508–Glu-529, Gln-536–Ala-557, His-559–Lys-579, Ala-583–Leu-604, Ala-606–Gln-627, Lys-631–Leu-652, Ser-654–Cys-675, Gly-677–Leu-698, Asn-700–Cys-721, Lys-723–Leu-744, and Ala-746–Cys-767.

The protein belongs to the LRRC8 family. As to quaternary structure, heterohexamer; oligomerizes with other LRRC8 proteins (LRRC8A, LRRC8C, LRRC8D and/or LRRC8B) to form a heterohexamer. In vivo, the subunit composition may depend primarily on expression levels, and heterooligomeric channels containing various proportions of the different LRRC8 proteins may coexist.

It localises to the cell membrane. It is found in the endoplasmic reticulum membrane. The protein resides in the lysosome membrane. It catalyses the reaction chloride(in) = chloride(out). The catalysed reaction is iodide(out) = iodide(in). The enzyme catalyses taurine(out) = taurine(in). It carries out the reaction 2',3'-cGAMP(out) = 2',3'-cGAMP(in). Functionally, non-essential component of the volume-regulated anion channel (VRAC, also named VSOAC channel), an anion channel required to maintain a constant cell volume in response to extracellular or intracellular osmotic changes. The VRAC channel conducts iodide better than chloride and can also conduct organic osmolytes like taurine. Mediates efflux of amino acids, such as aspartate, in response to osmotic stress. The VRAC channel also mediates transport of immunoreactive cyclic dinucleotide GMP-AMP (2'-3'-cGAMP), an immune messenger produced in response to DNA virus in the cytosol. Channel activity requires LRRC8A plus at least one other family member (LRRC8B, LRRC8C, LRRC8D or LRRC8E); channel characteristics depend on the precise subunit composition. Also plays a role in lysosome homeostasis by forming functional lysosomal VRAC channels in response to low cytoplasmic ionic strength condition: lysosomal VRAC channels are necessary for the formation of large lysosome-derived vacuoles, which store and then expel excess water to maintain cytosolic water homeostasis. This Homo sapiens (Human) protein is Volume-regulated anion channel subunit LRRC8E.